Reading from the N-terminus, the 290-residue chain is Probable transcriptional regulatory protein HAH1 (290 aa).

The protein belongs to the TACO1 family.

It localises to the mitochondrion. This chain is Probable transcriptional regulatory protein HAH1, found in Saccharomyces cerevisiae (strain ATCC 204508 / S288c) (Baker's yeast).